The sequence spans 329 residues: MASQLTDVFARKFYYLRLSITDVCNFRCTYCLPDGYKPSGVTNKGFLTVDEIRRVTRAFASLGTEKVRLTGGEPSLRRDFTDIIAAVRENDAIRQIAVTTNGYRLERDVANWRDAGLTGINVSVDSLDARQFHAITGQDKFNQVMAGIDAAFEAGFEKVKVNTVLMRDVNHHQLDTFLNWIQHRPIQLRFIELMETGEGSELFRKHHISGQVLRDELLRRGWIHQLRQRSDGPAQVFCHPDYAGEIGLIMPYEKDFCATCNRLRVSSIGKLHLCLFGEGGVNLRDLLEGDTQQQALEARISAALREKKQTHFLHQNNTGITQNLSYIGG.

Positions 8 to 234 constitute a Radical SAM core domain; sequence VFARKFYYLR…QLRQRSDGPA (227 aa). R17 is a binding site for GTP. [4Fe-4S] cluster contacts are provided by C24 and C28. Y30 lines the S-adenosyl-L-methionine pocket. [4Fe-4S] cluster is bound at residue C31. GTP is bound at residue R68. Position 72 (G72) interacts with S-adenosyl-L-methionine. T99 serves as a coordination point for GTP. S123 serves as a coordination point for S-adenosyl-L-methionine. Residue K160 coordinates GTP. M194 is a binding site for S-adenosyl-L-methionine. [4Fe-4S] cluster-binding residues include C257 and C260. 262-264 contributes to the GTP binding site; that stretch reads RLR. C274 is a binding site for [4Fe-4S] cluster.

Belongs to the radical SAM superfamily. MoaA family. Monomer and homodimer. It depends on [4Fe-4S] cluster as a cofactor.

The catalysed reaction is GTP + AH2 + S-adenosyl-L-methionine = (8S)-3',8-cyclo-7,8-dihydroguanosine 5'-triphosphate + 5'-deoxyadenosine + L-methionine + A + H(+). It participates in cofactor biosynthesis; molybdopterin biosynthesis. Functionally, catalyzes the cyclization of GTP to (8S)-3',8-cyclo-7,8-dihydroguanosine 5'-triphosphate. The sequence is that of GTP 3',8-cyclase from Shigella flexneri.